A 435-amino-acid polypeptide reads, in one-letter code: Nuclear hormone receptor family member nhr-28 (435 aa).

A DNA-binding region (nuclear receptor) is located at residues 5 to 80 (KKPCSVCGEA…VGMRKSAVQR (76 aa)). 2 NR C4-type zinc fingers span residues 8 to 28 (CSVCGEAGDGAHFGAEACRAC) and 44 to 63 (CRAMGACIIQKNVRCMCRAC). Positions 84 to 106 (LFGRQDSSDGSNPRVSPSTSWPM) are disordered. Residues 91–104 (SDGSNPRVSPSTSW) are compositionally biased toward polar residues. One can recognise an NR LBD domain in the interval 113 to 374 (IEEPGMATLN…ETFYELVSGR (262 aa)).

Belongs to the nuclear hormone receptor family.

The protein resides in the nucleus. Orphan nuclear receptor. The chain is Nuclear hormone receptor family member nhr-28 from Caenorhabditis briggsae.